The chain runs to 481 residues: 7-deoxyloganetin glucosyltransferase (481 aa).

Histidine 22 functions as the Proton acceptor in the catalytic mechanism. Histidine 22 is an an anthocyanidin binding site. Residue aspartate 126 is the Charge relay of the active site. UDP-alpha-D-glucose is bound by residues threonine 148, glutamine 363, histidine 378, tryptophan 381, asparagine 382, serine 383, and glutamate 386. An anthocyanidin is bound at residue alanine 401. Glutamate 402 and glutamine 403 together coordinate UDP-alpha-D-glucose.

Belongs to the UDP-glycosyltransferase family. As to expression, ubiquitous. Very low expression in stems.

The catalysed reaction is 7-deoxyloganetin + UDP-alpha-D-glucose = 7-deoxyloganin + UDP + H(+). Its function is as follows. Iridoid glucosyltransferase acting on genipin and 7-deoxyloganetin. No activity with 7-deoxyloganetic acid. Involved in geniposide biosynthesis. In Gardenia jasminoides (Cape jasmine), this protein is 7-deoxyloganetin glucosyltransferase (UGT85A24).